The primary structure comprises 269 residues: 4-hydroxy-tetrahydrodipicolinate reductase (269 aa).

Residues Gly13 to Met18 and Asp39 each bind NAD(+). An NADP(+)-binding site is contributed by Arg40. Residues Gly101–Thr103 and Ala125–Met128 each bind NAD(+). Residue His158 is the Proton donor/acceptor of the active site. His159 contacts (S)-2,3,4,5-tetrahydrodipicolinate. Catalysis depends on Lys162, which acts as the Proton donor. Gly168–Thr169 is a (S)-2,3,4,5-tetrahydrodipicolinate binding site.

This sequence belongs to the DapB family.

It is found in the cytoplasm. The enzyme catalyses (S)-2,3,4,5-tetrahydrodipicolinate + NAD(+) + H2O = (2S,4S)-4-hydroxy-2,3,4,5-tetrahydrodipicolinate + NADH + H(+). It carries out the reaction (S)-2,3,4,5-tetrahydrodipicolinate + NADP(+) + H2O = (2S,4S)-4-hydroxy-2,3,4,5-tetrahydrodipicolinate + NADPH + H(+). It participates in amino-acid biosynthesis; L-lysine biosynthesis via DAP pathway; (S)-tetrahydrodipicolinate from L-aspartate: step 4/4. In terms of biological role, catalyzes the conversion of 4-hydroxy-tetrahydrodipicolinate (HTPA) to tetrahydrodipicolinate. The sequence is that of 4-hydroxy-tetrahydrodipicolinate reductase from Bordetella bronchiseptica (strain ATCC BAA-588 / NCTC 13252 / RB50) (Alcaligenes bronchisepticus).